The primary structure comprises 102 residues: NADH-quinone oxidoreductase subunit K (102 aa).

Helical transmembrane passes span 5–25, 31–51, and 66–86; these read ITHY…GIFL, IIIL…FVAF, and FILT…VVFF.

The protein belongs to the complex I subunit 4L family. In terms of assembly, NDH-1 is composed of 14 different subunits. Subunits NuoA, H, J, K, L, M, N constitute the membrane sector of the complex.

The protein resides in the cell inner membrane. The enzyme catalyses a quinone + NADH + 5 H(+)(in) = a quinol + NAD(+) + 4 H(+)(out). NDH-1 shuttles electrons from NADH, via FMN and iron-sulfur (Fe-S) centers, to quinones in the respiratory chain. The immediate electron acceptor for the enzyme in this species is believed to be ubiquinone. Couples the redox reaction to proton translocation (for every two electrons transferred, four hydrogen ions are translocated across the cytoplasmic membrane), and thus conserves the redox energy in a proton gradient. This is NADH-quinone oxidoreductase subunit K from Bartonella quintana (strain Toulouse) (Rochalimaea quintana).